A 230-amino-acid polypeptide reads, in one-letter code: Orotidine 5'-phosphate decarboxylase (230 aa).

Residues Asp-11, Lys-34, 61–70 (DLKLHDIPNT), Thr-117, Arg-179, Gln-188, Gly-208, and Arg-209 contribute to the substrate site. The active-site Proton donor is the Lys-63.

It belongs to the OMP decarboxylase family. Type 1 subfamily. As to quaternary structure, homodimer.

It carries out the reaction orotidine 5'-phosphate + H(+) = UMP + CO2. The protein operates within pyrimidine metabolism; UMP biosynthesis via de novo pathway; UMP from orotate: step 2/2. Catalyzes the decarboxylation of orotidine 5'-monophosphate (OMP) to uridine 5'-monophosphate (UMP). The sequence is that of Orotidine 5'-phosphate decarboxylase from Streptococcus mutans serotype c (strain ATCC 700610 / UA159).